We begin with the raw amino-acid sequence, 152 residues long: Biotin carboxyl carrier protein of acetyl-CoA carboxylase (152 aa).

Residues 72-148 form the Biotinyl-binding domain; that stretch reads IIDILSPISG…TKNQVLMKII (77 aa). Residue Lys-114 is modified to N6-biotinyllysine.

Its subcellular location is the plastid. The protein resides in the chloroplast. It participates in lipid metabolism; fatty acid biosynthesis. Its function is as follows. This protein is a component of the acetyl coenzyme A carboxylase complex; first, biotin carboxylase catalyzes the carboxylation of the carrier protein and then the transcarboxylase transfers the carboxyl group to form malonyl-CoA. This is Biotin carboxyl carrier protein of acetyl-CoA carboxylase (accB) from Cyanidium caldarium (Red alga).